Consider the following 343-residue polypeptide: Probable transposase for insertion sequence element (343 aa).

Belongs to the transposase mutator family.

Required for the transposition of the insertion element. This Corynebacterium diphtheriae protein is Probable transposase for insertion sequence element.